The following is a 106-amino-acid chain: CDGSH iron-sulfur domain-containing protein 1 (106 aa).

S2 carries the N-acetylserine modification. A helical; Signal-anchor for type III membrane protein membrane pass occupies residues 10–29; that stretch reads EWIAAVTIAAGTAAIGYLAY. The Cytoplasmic portion of the chain corresponds to 30–106; it reads KRFYVKDHRN…GPLIIKKKDT (77 aa). A Glycyl lysine isopeptide (Lys-Gly) (interchain with G-Cter in ubiquitin) cross-link involves residue K40. The active-site Schiff-base intermediate with pyridoxal 5'-phosphate is the K53. K53 and K66 each carry N6-acetyllysine; alternate. Residues K53 and K66 each participate in a glycyl lysine isopeptide (Lys-Gly) (interchain with G-Cter in ubiquitin); alternate cross-link. [2Fe-2S] cluster is bound by residues C70 and C72. Glycyl lysine isopeptide (Lys-Gly) (interchain with G-Cter in ubiquitin) cross-links involve residues K76 and K77. The [2Fe-2S] cluster site is built by C81 and H85. A disordered region spans residues 84-106; sequence SHTKHNEETGDNVGPLIIKKKDT. K87 participates in a covalent cross-link: Glycyl lysine isopeptide (Lys-Gly) (interchain with G-Cter in ubiquitin). N6-acetyllysine; alternate is present on K102. Residue K102 forms a Glycyl lysine isopeptide (Lys-Gly) (interchain with G-Cter in ubiquitin); alternate linkage. Residues K103 and K104 each participate in a glycyl lysine isopeptide (Lys-Gly) (interchain with G-Cter in ubiquitin) cross-link.

This sequence belongs to the CISD protein family. As to quaternary structure, homodimer. It depends on [2Fe-2S] cluster as a cofactor. Requires pyridoxal 5'-phosphate as cofactor. In terms of processing, ubiquitinated by PRKN during mitophagy, leading to its degradation and enhancement of mitophagy. Deubiquitinated by USP30.

It is found in the mitochondrion outer membrane. The catalysed reaction is L-cysteine + 2-oxoglutarate = 2-oxo-3-sulfanylpropanoate + L-glutamate. In terms of biological role, L-cysteine transaminase that catalyzes the reversible transfer of the amino group from L-cysteine to the alpha-keto acid 2-oxoglutarate to respectively form 2-oxo-3-sulfanylpropanoate and L-glutamate. The catalytic cycle occurs in the presence of pyridoxal 5'-phosphate (PLP) cofactor that facilitates transamination by initially forming an internal aldimine with the epsilon-amino group of active site Lys-55 residue on the enzyme (PLP-enzyme aldimine), subsequently displaced by formation of an external aldimine with the substrate amino group (PLP-L-cysteine aldimine). The external aldimine is further deprotonated to form a carbanion intermediate, which in the presence of 2-oxoglutarate regenerates PLP yielding final products 2-oxo-3-sulfanylpropanoate and L-glutamate. The proton transfer in carbanion intermediate is suggested to be controlled by the active site lysine residue, whereas PLP stabilizes carbanion structure through electron delocalization, also known as the electron sink effect. Plays a key role in regulating maximal capacity for electron transport and oxidative phosphorylation. May be involved in iron-sulfur cluster shuttling and/or in redox reactions. Can transfer the [2Fe-2S] cluster to an apo-acceptor protein only when in the oxidation state, likely serving as a redox sensor that regulates mitochondrial iron-sulfur cluster assembly and iron trafficking upon oxidative stress. The chain is CDGSH iron-sulfur domain-containing protein 1 (CISD1) from Bos taurus (Bovine).